The chain runs to 217 residues: EF-hand domain-containing protein D2 homolog (217 aa).

Low complexity predominate over residues 1–28; it reads MSVSSNASSASNKDSVDSPSSTTNTDSS. A disordered region spans residues 1 to 29; the sequence is MSVSSNASSASNKDSVDSPSSTTNTDSSE. 2 consecutive EF-hand domains span residues 69-104 and 105-140; these read NQIK…LGAP and QTHL…AQAG. Ca(2+) contacts are provided by Asp82, Asp86, Glu93, Asp118, Asp120, Asp122, Lys124, and Glu129. A compositionally biased stretch (basic and acidic residues) spans 191–204; it reads EQEERRREEEERAQ. The segment at 191–217 is disordered; the sequence is EQEERRREEEERAQRRQQFQQRAAIFQ. Low complexity predominate over residues 206 to 217; it reads RQQFQQRAAIFQ.

The chain is EF-hand domain-containing protein D2 homolog (Swip-1) from Drosophila melanogaster (Fruit fly).